The primary structure comprises 383 residues: L-lactate dehydrogenase (383 aa).

The FMN hydroxy acid dehydrogenase domain maps to 1-380 (MIISSGNDYR…NADCLVQAIK (380 aa)). Tyrosine 24 contributes to the substrate binding site. FMN is bound by residues serine 106 and glutamine 127. Tyrosine 129 contributes to the substrate binding site. FMN is bound at residue threonine 155. Arginine 164 serves as a coordination point for substrate. An FMN-binding site is contributed by lysine 251. Histidine 275 (proton acceptor) is an active-site residue. Arginine 278 serves as a coordination point for substrate. 306 to 330 (DSGIRNGLDVVRMLALGADTVLLGR) is an FMN binding site.

The protein belongs to the FMN-dependent alpha-hydroxy acid dehydrogenase family. FMN serves as cofactor.

It localises to the cell inner membrane. It catalyses the reaction (S)-lactate + A = pyruvate + AH2. Catalyzes the conversion of L-lactate to pyruvate. Is coupled to the respiratory chain. The polypeptide is L-lactate dehydrogenase (Acinetobacter baumannii (strain AB307-0294)).